We begin with the raw amino-acid sequence, 1176 residues long: Surface-layer 125 kDa protein (1176 aa).

The signal sequence occupies residues 1–30 (MAKQNKGRKFFAASATAALVASAIVPVASA). 3 consecutive SLH domains span residues 31-88 (AQLN…LEAE), 89-152 (GDVN…DLSE), and 153-216 (FADA…PKVD).

The protein localises to the secreted. The protein resides in the cell wall. It localises to the S-layer. In terms of biological role, the S-layer is a paracrystalline mono-layered assembly of proteins which coat the surface of bacteria. This Lysinibacillus sphaericus (Bacillus sphaericus) protein is Surface-layer 125 kDa protein.